Reading from the N-terminus, the 146-residue chain is Leptin (146 aa).

An intrachain disulfide couples Cys96 to Cys146.

Belongs to the leptin family.

The protein resides in the secreted. Key player in the regulation of energy balance and body weight control. Once released into the circulation, has central and peripheral effects by binding LEPR, found in many tissues, which results in the activation of several major signaling pathways. In the hypothalamus, acts as an appetite-regulating factor that induces a decrease in food intake and an increase in energy consumption by inducing anorexinogenic factors and suppressing orexigenic neuropeptides, also regulates bone mass and secretion of hypothalamo-pituitary-adrenal hormones. In the periphery, increases basal metabolism, influences reproductive function, regulates pancreatic beta-cell function and insulin secretion, is pro-angiogenic for endothelial cell and affects innate and adaptive immunity. In the arcuate nucleus of the hypothalamus, activates by depolarization POMC neurons inducing FOS and SOCS3 expression to release anorexigenic peptides and inhibits by hyperpolarization NPY neurons inducing SOCS3 with a consequent reduction on release of orexigenic peptides. In addition to its known satiety inducing effect, has a modulatory role in nutrient absorption. In the intestine, reduces glucose absorption by enterocytes by activating PKC and leading to a sequential activation of p38, PI3K and ERK signaling pathways which exerts an inhibitory effect on glucose absorption. Acts as a growth factor on certain tissues, through the activation of different signaling pathways increases expression of genes involved in cell cycle regulation such as CCND1, via JAK2-STAT3 pathway, or VEGFA, via MAPK1/3 and PI3K-AKT1 pathways. May also play an apoptotic role via JAK2-STAT3 pathway and up-regulation of BIRC5 expression. Pro-angiogenic, has mitogenic activity on vascular endothelial cells and plays a role in matrix remodeling by regulating the expression of matrix metalloproteinases (MMPs) and tissue inhibitors of metalloproteinases (TIMPs). In innate immunity, modulates the activity and function of neutrophils by increasing chemotaxis and the secretion of oxygen radicals. Increases phagocytosis by macrophages and enhances secretion of pro-inflammatory mediators. Increases cytotoxic ability of NK cells. Plays a pro-inflammatory role, in synergy with IL1B, by inducing NOS2 which promotes the production of IL6, IL8 and Prostaglandin E2, through a signaling pathway that involves JAK2, PI3K, MAP2K1/MEK1 and MAPK14/p38. In adaptive immunity, promotes the switch of memory T-cells towards T helper-1 cell immune responses. Increases CD4(+)CD25(-) T-cell proliferation and reduces autophagy during TCR (T-cell receptor) stimulation, through MTOR signaling pathway activation and BCL2 up-regulation. This Pan troglodytes (Chimpanzee) protein is Leptin (LEP).